The chain runs to 36 residues: Photosystem I reaction center subunit VIII (36 aa).

The helical transmembrane segment at 9–29 (ILVPLVGLIFPALSMALLFIY) threads the bilayer.

Belongs to the PsaI family.

It is found in the plastid. The protein resides in the chloroplast thylakoid membrane. May help in the organization of the PsaL subunit. This is Photosystem I reaction center subunit VIII from Pyropia yezoensis (Susabi-nori).